The chain runs to 414 residues: Serine/threonine transporter SstT (414 aa).

At 2–15 the chain is on the cytoplasmic side; sequence TTQRSPGLFRRLAH. Residues 16-36 form a helical membrane-spanning segment; sequence GSLVKQILVGLVLGILLAWIS. Topologically, residues 37–45 are periplasmic; sequence KPAAEAVGL. A helical membrane pass occupies residues 46–66; the sequence is LGTLFVGALKAVAPILVLMLV. The Cytoplasmic segment spans residues 67–83; sequence MASIANHQHGQKTNILP. A helical membrane pass occupies residues 84-104; sequence ILFLYLLGTFSAALAAVVFSF. Residues 105-142 are Periplasmic-facing; it reads AFPSTLHLSSSAGDISPPSGIVEVMRGLVMSMVSNPID. Residues 143 to 163 traverse the membrane as a helical segment; the sequence is ALLKGNYIGILVWAIGLGFAL. At 164–179 the chain is on the cytoplasmic side; that stretch reads RHGNETTKNLVNDMSN. A helical transmembrane segment spans residues 180–200; that stretch reads AVTFMVKLVIRFAPIGIFGLV. Residues 201 to 217 are Periplasmic-facing; it reads SSTLATTGFSTLWGYAQ. Residues 218-238 form a helical membrane-spanning segment; the sequence is LLVVLVGCMLLVALVVNPLLV. Residues 239-299 lie on the Cytoplasmic side of the membrane; that stretch reads WWKIRRNPFP…VSIPLGATIN (61 aa). A helical transmembrane segment spans residues 300–320; the sequence is MAGAAITITVLTLAAVNTLGI. Residues 321–331 are Periplasmic-facing; sequence PVDLPTALLLS. Residues 332–352 form a helical membrane-spanning segment; that stretch reads VVASLCACGASGVAGGSLLLI. Residues 353–414 are Cytoplasmic-facing; it reads PLACNMFGIS…DRLANSALRN (62 aa).

This sequence belongs to the dicarboxylate/amino acid:cation symporter (DAACS) (TC 2.A.23) family.

The protein localises to the cell inner membrane. It catalyses the reaction L-serine(in) + Na(+)(in) = L-serine(out) + Na(+)(out). The catalysed reaction is L-threonine(in) + Na(+)(in) = L-threonine(out) + Na(+)(out). In terms of biological role, involved in the import of serine and threonine into the cell, with the concomitant import of sodium (symport system). This Shigella dysenteriae serotype 1 (strain Sd197) protein is Serine/threonine transporter SstT.